Reading from the N-terminus, the 235-residue chain is MSKRSKAYRAAAEKVDRDNLYTPLQAAKLAKETSSTKQDATVEVAIRLGVDPRKADQMVRGTVNLPHGTGKTARVAVFAVGEKAEQAQAAGADIVGSDDLIEKIQGGFLDFDAAIATPDQMAKVGRIARVLGPRGLMPNPKTGTVTPDVAKAVADIKGGKINFRVDKQANLHFVIGKASFDEKALAENYGAALDEVLRLKPSASKGRYLKKITVSTTTGPGIPVDPSITRNFAEA.

This sequence belongs to the universal ribosomal protein uL1 family. In terms of assembly, part of the 50S ribosomal subunit.

Binds directly to 23S rRNA. The L1 stalk is quite mobile in the ribosome, and is involved in E site tRNA release. In terms of biological role, protein L1 is also a translational repressor protein, it controls the translation of the L11 operon by binding to its mRNA. This is Large ribosomal subunit protein uL1 from Mycolicibacterium paratuberculosis (strain ATCC BAA-968 / K-10) (Mycobacterium paratuberculosis).